The sequence spans 118 residues: Small ribosomal subunit protein uS17 (118 aa).

It belongs to the universal ribosomal protein uS17 family. Part of the 30S ribosomal subunit.

Its function is as follows. One of the primary rRNA binding proteins, it binds specifically to the 5'-end of 16S ribosomal RNA. The sequence is that of Small ribosomal subunit protein uS17 from Methanopyrus kandleri (strain AV19 / DSM 6324 / JCM 9639 / NBRC 100938).